Consider the following 230-residue polypeptide: Octanoyltransferase (230 aa).

A BPL/LPL catalytic domain is found at 38–215; sequence AGGADTLLLL…AVCAALDGVL (178 aa). Substrate is bound by residues 76 to 83, 145 to 147, and 158 to 160; these read RGGKITWH, AIG, and GFA. The Acyl-thioester intermediate role is filled by cysteine 176.

Belongs to the LipB family.

Its subcellular location is the cytoplasm. It catalyses the reaction octanoyl-[ACP] + L-lysyl-[protein] = N(6)-octanoyl-L-lysyl-[protein] + holo-[ACP] + H(+). The protein operates within protein modification; protein lipoylation via endogenous pathway; protein N(6)-(lipoyl)lysine from octanoyl-[acyl-carrier-protein]: step 1/2. In terms of biological role, catalyzes the transfer of endogenously produced octanoic acid from octanoyl-acyl-carrier-protein onto the lipoyl domains of lipoate-dependent enzymes. Lipoyl-ACP can also act as a substrate although octanoyl-ACP is likely to be the physiological substrate. The chain is Octanoyltransferase from Mycobacterium bovis (strain BCG / Tokyo 172 / ATCC 35737 / TMC 1019).